The primary structure comprises 655 residues: ATP-dependent zinc metalloprotease FtsH (655 aa).

Residues 1–17 lie on the Cytoplasmic side of the membrane; it reads MPIETEPNRTRKNFEPK. Residues 18–38 form a helical membrane-spanning segment; that stretch reads RFGGSLFILFTLLLFLNLFVL. The Lumenal portion of the chain corresponds to 39 to 124; the sequence is RGPRFPITAY…APPPSSLSWL (86 aa). The helical transmembrane segment at 125-145 threads the bilayer; sequence PTLLGWVVPPLIFFGIWSWLI. The Cytoplasmic portion of the chain corresponds to 146–655; the sequence is NRNQGAGPAA…LNSHQLIGIN (510 aa). Residue 216–223 coordinates ATP; sequence GPPGTGKT. His-440 contributes to the Zn(2+) binding site. Glu-441 is a catalytic residue. Residues His-444 and Asp-517 each contribute to the Zn(2+) site.

This sequence in the central section; belongs to the AAA ATPase family. The protein in the C-terminal section; belongs to the peptidase M41 family. In terms of assembly, homohexamer. Zn(2+) is required as a cofactor.

It is found in the cellular thylakoid membrane. Acts as a processive, ATP-dependent zinc metallopeptidase for both cytoplasmic and membrane proteins. Plays a role in the quality control of integral membrane proteins. The protein is ATP-dependent zinc metalloprotease FtsH of Acaryochloris marina (strain MBIC 11017).